The sequence spans 444 residues: Chromosome partition protein MukF (444 aa).

The interval 211–239 (LDETSGNLRELQDTLNAAGDKLQAQLLRI) is leucine-zipper.

Belongs to the MukF family. As to quaternary structure, interacts, and probably forms a ternary complex, with MukE and MukB via its C-terminal region. The complex formation is stimulated by calcium or magnesium. It is required for an interaction between MukE and MukB.

Its subcellular location is the cytoplasm. It localises to the nucleoid. Involved in chromosome condensation, segregation and cell cycle progression. May participate in facilitating chromosome segregation by condensation DNA from both sides of a centrally located replisome during cell division. Not required for mini-F plasmid partitioning. Probably acts via its interaction with MukB and MukE. Overexpression results in anucleate cells. It has a calcium binding activity. This Actinobacillus succinogenes (strain ATCC 55618 / DSM 22257 / CCUG 43843 / 130Z) protein is Chromosome partition protein MukF.